The following is a 217-amino-acid chain: Dephospho-CoA kinase (217 aa).

The region spanning 4–203 (IVALTGGISS…SHLSRIYNKN (200 aa)) is the DPCK domain. Position 12–17 (12–17 (SSGKTT)) interacts with ATP.

This sequence belongs to the CoaE family.

The protein resides in the cytoplasm. The catalysed reaction is 3'-dephospho-CoA + ATP = ADP + CoA + H(+). It functions in the pathway cofactor biosynthesis; coenzyme A biosynthesis; CoA from (R)-pantothenate: step 5/5. Its function is as follows. Catalyzes the phosphorylation of the 3'-hydroxyl group of dephosphocoenzyme A to form coenzyme A. The protein is Dephospho-CoA kinase of Buchnera aphidicola subsp. Acyrthosiphon pisum (strain APS) (Acyrthosiphon pisum symbiotic bacterium).